The chain runs to 564 residues: MAHSKEIPSFRWTQSLRRGLSQVHPTVKTDVLKDAKLIADSIDFNQVSQVQRALRKNKRGEEDLNKLRDLNKEVDRLMSMKSIQKNTIFKIGDLGRDELMELASDLEKLKNKIKRTESGPQGLYMGNLSQLQLTKRSEILKTLGFQQQRGAGNGVVRIWDVSDPSKLNNQFGSMPALTIACMTVQGGETMNSVVQALTSLGLLYTVKYPNLNDLDKLTLEHECLQIVTKDESSINISGYNFSLSAAVKAGASILDGGNMLETIRVTPDNFSSLIKSTLQVKRKEGMFIDEKPGNRNPYENLLYKLCLSGDGWPYIGSRSQILGRSWDNTSVDLTKKPQVGPRQPEKNGQNLRLANLTEMQEAVIKEAVKKLDPTNTLWLDIEGPPTDPVELALYQPANKHYIHCFRKPHDEKGFKNGSRHSHGILMQDIEDAMPGVLSYVIGLLPQDMVITTQGSDDIRKLLDIHGRKDLKLVDVKLTSDQARLYDQQIWEKFGHLCKHHNGVVVNKKKREKDSPFKLSSGEPHCALLDCIMYQSVMDGKMVDEEPVALLPLSLLFLPKAAFAL.

The binding site for the cap structure m7GTP stretch occupies residues 54 to 236; that stretch reads LRKNKRGEED…VTKDESSINI (183 aa). Mn(2+) is bound by residues aspartate 380 and glutamate 382. Positions 390, 497, 500, and 525 each coordinate Zn(2+). Aspartate 529 is a Mn(2+) binding site.

The protein belongs to the arenaviridae nucleocapsid protein family. In terms of assembly, homomultimerizes to form the nucleocapsid. Binds to viral genomic RNA. Interacts with glycoprotein G2. Interacts with protein Z; this interaction probably directs the encapsidated genome to budding sites. Interacts with protein L; this interaction does not interfere with Z-L interaction. Interacts with host IKBKE (via Protein kinase domain); the interaction inhibits IKBKE kinase activity.

The protein resides in the virion. Its subcellular location is the host cytoplasm. Encapsidates the genome, protecting it from nucleases. The encapsidated genomic RNA is termed the nucleocapsid (NC). Serves as template for viral transcription and replication. The increased presence of protein N in host cell does not seem to trigger the switch from transcription to replication as observed in other negative strain RNA viruses. Through the interaction with host IKBKE, strongly inhibits the phosphorylation and nuclear translocation of host IRF3, a protein involved in interferon activation pathway, leading to the inhibition of interferon-beta and IRF3-dependent promoters activation. Also encodes a functional 3'-5' exoribonuclease that degrades preferentially dsRNA substrates and thereby participates in the suppression of interferon induction. This Calomys callosus (Large vesper mouse) protein is Nucleoprotein.